Here is a 1592-residue protein sequence, read N- to C-terminus: ABC transporter ATP-binding protein/permease VMR1 (1592 aa).

Residues 1–33 (MGTDPLIIRNNGSFWEVDDFTRLGRTQLLSYYL) are Vacuolar-facing. The N-linked (GlcNAc...) asparagine glycan is linked to N11. A helical transmembrane segment spans residues 34–54 (PLAIIASIGIFALCRSGLSRY). Residues 55–74 (VRSAECDLVNEYLFGAQEER) are Cytoplasmic-facing. Residues 75–95 (KEDNSIERLLRNSNTQANYVN) traverse the membrane as a helical segment. Residues 96–100 (VKKQG) lie on the Vacuolar side of the membrane. The helical transmembrane segment at 101–121 (RILKLRHFDITTIDVKQIDAK) threads the bilayer. The Cytoplasmic portion of the chain corresponds to 122–131 (NHGGLTFSRP). A helical transmembrane segment spans residues 132–152 (STSDHLRKSSEIVLMSLQIIG). The Vacuolar segment spans residues 153–170 (LSFLRVTKINIELTNRDV). Residues 171–191 (TTLLLFWLILLSLSILRVYKR) form a helical membrane-spanning segment. Residues 192–329 (STNLWAICFT…NKHINNLTLA (138 aa)) lie on the Cytoplasmic side of the membrane. Residues 330–350 (LFESFKTYLLIGMLWVLVNSI) form a helical membrane-spanning segment. In terms of domain architecture, ABC transmembrane type-1 1 spans 338 to 632 (LLIGMLWVLV…LSNMLSFINQ (295 aa)). The Vacuolar segment spans residues 351–379 (VNLLPTILMKRFLEIVDNPNRSSSCMNLA). N-linked (GlcNAc...) asparagine glycosylation occurs at N370. The helical transmembrane segment at 380–400 (WLYIIGMFICRLTLAICNSQG) threads the bilayer. At 401–465 (QFVSDKICLR…SFKVSELANY (65 aa)) the chain is on the cytoplasmic side. Residues 466 to 486 (LYVTVQAVIMIIVVVGLLFNF) traverse the membrane as a helical segment. Residues 487–489 (LGV) lie on the Vacuolar side of the membrane. The chain crosses the membrane as a helical span at residues 490–510 (SAFAGISIILVMFPLNFLLAN). The Cytoplasmic portion of the chain corresponds to 511 to 572 (LLGKFQKQTL…SLLKKSLVWS (62 aa)). The chain crosses the membrane as a helical span at residues 573-593 (VTSFLWFVTPTLVTGVTFAIC). At 594-614 (TFVQHEDLNAPLAFTTLSLFT) the chain is on the vacuolar side. The chain crosses the membrane as a helical span at residues 615–635 (LLKTPLDQLSNMLSFINQSKV). The Cytoplasmic portion of the chain corresponds to 636 to 989 (SLKRISDFLR…ALTALFALYI (354 aa)). The 245-residue stretch at 664-908 (IEFKNATLTW…GLFKEKYVQL (245 aa)) folds into the ABC transporter 1 domain. 702–709 (GSTGSGKS) lines the ATP pocket. The 302-residue stretch at 981 to 1282 (LTALFALYIT…LVRLYSTFEM (302 aa)) folds into the ABC transmembrane type-1 2 domain. The helical transmembrane segment at 990–1010 (TAQILFISQSWWIRHWVNDTN) threads the bilayer. Topologically, residues 1011–1051 (VRINAPGFAMDTLPLKGMTDSSKNKHNAFYYLTVYFLIGII) are vacuolar. A helical transmembrane segment spans residues 1052 to 1072 (QAMLGGFKTMMTFLSGMRASR). Residues 1073-1115 (KIFNNLLDLVLHAQIRFFDVTPVGRIMNRFSKDIEGVDQELIP) lie on the Cytoplasmic side of the membrane. Residues 1116 to 1136 (YLEVTIFCLIQCASIIFLITV) form a helical membrane-spanning segment. Position 1137 (I1137) is a topological domain, vacuolar. A helical membrane pass occupies residues 1138-1158 (TPRFLTVAVIVFVLYFFVGKW). Topologically, residues 1159 to 1229 (YLTASRELKR…VTVKWFSFRV (71 aa)) are cytoplasmic. A helical membrane pass occupies residues 1230–1250 (DMIGAFIVLASGSFILLNIAN). Over 1251-1252 (ID) the chain is Vacuolar. A helical membrane pass occupies residues 1253–1273 (SGLAGISLTYAILFTDGALWL). Over 1274–1592 (VRLYSTFEMN…IAKQSSKMMK (319 aa)) the chain is Cytoplasmic. Residues 1323–1572 (IEIENLSLRY…ERGIFYSMCR (250 aa)) form the ABC transporter 2 domain. 1357–1364 (GRTGAGKS) is an ATP binding site.

The protein belongs to the ABC transporter superfamily. ABC transporter which may be involved in multidrug resistance.

It localises to the vacuole membrane. This Saccharomyces cerevisiae (strain ATCC 204508 / S288c) (Baker's yeast) protein is ABC transporter ATP-binding protein/permease VMR1 (VMR1).